The following is a 162-amino-acid chain: ATP synthase subunit b (162 aa).

Residues 4–24 (INWGSIIYQLIAFCVLLWLLS) form a helical membrane-spanning segment.

It belongs to the ATPase B chain family. As to quaternary structure, F-type ATPases have 2 components, F(1) - the catalytic core - and F(0) - the membrane proton channel. F(1) has five subunits: alpha(3), beta(3), gamma(1), delta(1), epsilon(1). F(0) has three main subunits: a(1), b(2) and c(10-14). The alpha and beta chains form an alternating ring which encloses part of the gamma chain. F(1) is attached to F(0) by a central stalk formed by the gamma and epsilon chains, while a peripheral stalk is formed by the delta and b chains.

The protein localises to the cell membrane. F(1)F(0) ATP synthase produces ATP from ADP in the presence of a proton or sodium gradient. F-type ATPases consist of two structural domains, F(1) containing the extramembraneous catalytic core and F(0) containing the membrane proton channel, linked together by a central stalk and a peripheral stalk. During catalysis, ATP synthesis in the catalytic domain of F(1) is coupled via a rotary mechanism of the central stalk subunits to proton translocation. In terms of biological role, component of the F(0) channel, it forms part of the peripheral stalk, linking F(1) to F(0). The protein is ATP synthase subunit b of Halalkalibacterium halodurans (strain ATCC BAA-125 / DSM 18197 / FERM 7344 / JCM 9153 / C-125) (Bacillus halodurans).